The primary structure comprises 172 residues: Trypsin inhibitor DE-3 (172 aa).

Cystine bridges form between Cys-39-Cys-83 and Cys-132-Cys-139.

Belongs to the protease inhibitor I3 (leguminous Kunitz-type inhibitor) family.

Functionally, inhibition of trypsin. The chain is Trypsin inhibitor DE-3 from Erythrina caffra (Kaffir tree).